Consider the following 329-residue polypeptide: DNA-directed RNA polymerase subunit alpha (329 aa).

Residues 1–233 (MVREKVKVST…NLFIPFLHVE (233 aa)) are alpha N-terminal domain (alpha-NTD). An alpha C-terminal domain (alpha-CTD) region spans residues 266–329 (TKELAFQYIF…KKILDILEKK (64 aa)).

It belongs to the RNA polymerase alpha chain family. In plastids the minimal PEP RNA polymerase catalytic core is composed of four subunits: alpha, beta, beta', and beta''. When a (nuclear-encoded) sigma factor is associated with the core the holoenzyme is formed, which can initiate transcription.

Its subcellular location is the plastid. The protein localises to the chloroplast. It carries out the reaction RNA(n) + a ribonucleoside 5'-triphosphate = RNA(n+1) + diphosphate. In terms of biological role, DNA-dependent RNA polymerase catalyzes the transcription of DNA into RNA using the four ribonucleoside triphosphates as substrates. This is DNA-directed RNA polymerase subunit alpha from Arabidopsis thaliana (Mouse-ear cress).